The primary structure comprises 308 residues: Pseudouridine-5'-phosphate glycosidase (308 aa).

E29 serves as the catalytic Proton donor. Substrate contacts are provided by K90 and V110. Position 142 (D142) interacts with Mn(2+). Position 144-146 (144-146 (SSD)) interacts with substrate. The active-site Nucleophile is K163.

It belongs to the pseudouridine-5'-phosphate glycosidase family. Homotrimer. Mn(2+) is required as a cofactor.

It catalyses the reaction D-ribose 5-phosphate + uracil = psi-UMP + H2O. Catalyzes the reversible cleavage of pseudouridine 5'-phosphate (PsiMP) to ribose 5-phosphate and uracil. Functions biologically in the cleavage direction, as part of a pseudouridine degradation pathway. The polypeptide is Pseudouridine-5'-phosphate glycosidase (Serratia proteamaculans (strain 568)).